The chain runs to 664 residues: Probable 3',5'-cyclic phosphodiesterase pde-1 (664 aa).

Disordered regions lie at residues threonine 24 to isoleucine 60 and arginine 113 to aspartate 142. 2 stretches are compositionally biased toward basic and acidic residues: residues serine 28–leucine 38 and asparagine 114–proline 130. The PDEase domain occupies valine 256 to glutamate 634. Residue histidine 333 is the Proton donor of the active site. Residues histidine 337, histidine 373, aspartate 374, and aspartate 480 each coordinate a divalent metal cation. Disordered regions lie at residues aspartate 564–serine 597 and arginine 630–asparagine 664. The span at arginine 630–alanine 644 shows a compositional bias: basic and acidic residues.

This sequence belongs to the cyclic nucleotide phosphodiesterase family. Interacts with cmd-1 in the presence of Ca(2+). A divalent metal cation is required as a cofactor. As to expression, expressed in AFD thermosensory neurons.

It carries out the reaction a nucleoside 3',5'-cyclic phosphate + H2O = a nucleoside 5'-phosphate + H(+). In terms of biological role, redundantly with pde-5, plays a role in the AFD thermosensory neurons to regulate microvilli receptive ending morphology, possibly by regulating cGMP levels. The chain is Probable 3',5'-cyclic phosphodiesterase pde-1 (pde-1) from Caenorhabditis elegans.